We begin with the raw amino-acid sequence, 299 residues long: Protein sprouty homolog 4 (299 aa).

An N-acetylmethionine modification is found at M1. Disordered stretches follow at residues N50–A79 and F92–R127. Positions F92–S107 are enriched in low complexity. S125 is modified (phosphoserine). Residues K166–C273 enclose the SPR domain.

The protein belongs to the sprouty family. Interacts (via C-terminus) with TESK1 (via both C- and N-termini); the interaction inhibits TESK1 kinase activity. Interacts with RAF1. Interacts with CAV1 (via C-terminus).

The protein resides in the cytoplasm. Its subcellular location is the cell projection. It localises to the ruffle membrane. Its function is as follows. Suppresses the insulin receptor and EGFR-transduced MAPK signaling pathway, but does not inhibit MAPK activation by a constitutively active mutant Ras. Probably impairs the formation of GTP-Ras. Inhibits Ras-independent, but not Ras-dependent, activation of RAF1. Represses integrin-mediated cell spreading via inhibition of TESK1-mediated phosphorylation of cofilin. The protein is Protein sprouty homolog 4 (SPRY4) of Bos taurus (Bovine).